The following is a 144-amino-acid chain: Protein MIX23 (144 aa).

The residue at position 2 (Ala2) is an N-acetylalanine. Positions 82-120 (VKSLREEREKNLDDLTLLKRLRKEQTKLKWMQSELNVEE) form a coiled coil. Lys100 is modified (N6-acetyllysine).

The protein belongs to the MIX23 family.

The chain is Protein MIX23 from Mus musculus (Mouse).